The primary structure comprises 203 residues: Orotate phosphoribosyltransferase (203 aa).

5-phospho-alpha-D-ribose 1-diphosphate-binding positions include R94, K98, H100, and 120-128 (EDLISTGGS). Residue S124 participates in orotate binding.

This sequence belongs to the purine/pyrimidine phosphoribosyltransferase family. PyrE subfamily. In terms of assembly, homodimer. Mg(2+) serves as cofactor.

It carries out the reaction orotidine 5'-phosphate + diphosphate = orotate + 5-phospho-alpha-D-ribose 1-diphosphate. Its pathway is pyrimidine metabolism; UMP biosynthesis via de novo pathway; UMP from orotate: step 1/2. In terms of biological role, catalyzes the transfer of a ribosyl phosphate group from 5-phosphoribose 1-diphosphate to orotate, leading to the formation of orotidine monophosphate (OMP). This is Orotate phosphoribosyltransferase from Staphylococcus saprophyticus subsp. saprophyticus (strain ATCC 15305 / DSM 20229 / NCIMB 8711 / NCTC 7292 / S-41).